Reading from the N-terminus, the 152-residue chain is Transcriptional regulator MraZ (152 aa).

SpoVT-AbrB domains follow at residues 5 to 52 (ATMV…PLPE) and 81 to 124 (ASEC…DEQT).

It belongs to the MraZ family. As to quaternary structure, forms oligomers.

The protein localises to the cytoplasm. It is found in the nucleoid. Functionally, negatively regulates its own expression and that of the subsequent genes in the proximal part of the division and cell wall (dcw) gene cluster. Acts by binding directly to DNA. May also regulate the expression of genes outside the dcw cluster. This chain is Transcriptional regulator MraZ, found in Serratia proteamaculans (strain 568).